Reading from the N-terminus, the 570-residue chain is Dihydroxy-acid dehydratase (570 aa).

Position 61 (Cys61) interacts with [2Fe-2S] cluster. Asp94 provides a ligand contact to Mg(2+). Cys135 contributes to the [2Fe-2S] cluster binding site. Residues Asp136 and Lys137 each contribute to the Mg(2+) site. Position 137 is an N6-carboxylysine (Lys137). Cys207 provides a ligand contact to [2Fe-2S] cluster. Mg(2+) is bound at residue Glu459. Ser485 serves as the catalytic Proton acceptor.

This sequence belongs to the IlvD/Edd family. In terms of assembly, homodimer. It depends on [2Fe-2S] cluster as a cofactor. Mg(2+) is required as a cofactor.

The catalysed reaction is (2R)-2,3-dihydroxy-3-methylbutanoate = 3-methyl-2-oxobutanoate + H2O. It catalyses the reaction (2R,3R)-2,3-dihydroxy-3-methylpentanoate = (S)-3-methyl-2-oxopentanoate + H2O. It participates in amino-acid biosynthesis; L-isoleucine biosynthesis; L-isoleucine from 2-oxobutanoate: step 3/4. Its pathway is amino-acid biosynthesis; L-valine biosynthesis; L-valine from pyruvate: step 3/4. Functions in the biosynthesis of branched-chain amino acids. Catalyzes the dehydration of (2R,3R)-2,3-dihydroxy-3-methylpentanoate (2,3-dihydroxy-3-methylvalerate) into 2-oxo-3-methylpentanoate (2-oxo-3-methylvalerate) and of (2R)-2,3-dihydroxy-3-methylbutanoate (2,3-dihydroxyisovalerate) into 2-oxo-3-methylbutanoate (2-oxoisovalerate), the penultimate precursor to L-isoleucine and L-valine, respectively. This is Dihydroxy-acid dehydratase from Lactococcus lactis subsp. lactis (strain IL1403) (Streptococcus lactis).